A 161-amino-acid polypeptide reads, in one-letter code: 2-C-methyl-D-erythritol 2,4-cyclodiphosphate synthase (161 aa).

Asp-10 and His-12 together coordinate a divalent metal cation. 4-CDP-2-C-methyl-D-erythritol 2-phosphate-binding positions include 10–12 (DVH) and 36–37 (HS). His-44 lines the a divalent metal cation pocket. 4-CDP-2-C-methyl-D-erythritol 2-phosphate-binding positions include 58–60 (DIG), 63–67 (FPDTD), 134–137 (TTTE), Phe-141, and Arg-144.

It belongs to the IspF family. In terms of assembly, homotrimer. A divalent metal cation is required as a cofactor.

The enzyme catalyses 4-CDP-2-C-methyl-D-erythritol 2-phosphate = 2-C-methyl-D-erythritol 2,4-cyclic diphosphate + CMP. It participates in isoprenoid biosynthesis; isopentenyl diphosphate biosynthesis via DXP pathway; isopentenyl diphosphate from 1-deoxy-D-xylulose 5-phosphate: step 4/6. Its function is as follows. Involved in the biosynthesis of isopentenyl diphosphate (IPP) and dimethylallyl diphosphate (DMAPP), two major building blocks of isoprenoid compounds. Catalyzes the conversion of 4-diphosphocytidyl-2-C-methyl-D-erythritol 2-phosphate (CDP-ME2P) to 2-C-methyl-D-erythritol 2,4-cyclodiphosphate (ME-CPP) with a corresponding release of cytidine 5-monophosphate (CMP). In Shewanella putrefaciens (strain CN-32 / ATCC BAA-453), this protein is 2-C-methyl-D-erythritol 2,4-cyclodiphosphate synthase.